The primary structure comprises 421 residues: Histidine--tRNA ligase (421 aa).

Belongs to the class-II aminoacyl-tRNA synthetase family.

The protein localises to the cytoplasm. It carries out the reaction tRNA(His) + L-histidine + ATP = L-histidyl-tRNA(His) + AMP + diphosphate + H(+). The polypeptide is Histidine--tRNA ligase (Pyrobaculum calidifontis (strain DSM 21063 / JCM 11548 / VA1)).